A 178-amino-acid polypeptide reads, in one-letter code: MDLKNLTQEERSELSLIDVAHFILEQRKETILFPELVKEIQAFLGLKDAEIRERLVQFYTDMNIDGNFISLGNNTWGLRAWYPMDAIDEEVQTQTTPKKKRKSDDDDDEDEEILDDDVDYDDEEIVEELGEEEISLADVLLDEDEDDDDHLPDGIEGDLATVEDDYTDGDYTEDPEDK.

The 68-residue stretch at 14 to 81 (LSLIDVAHFI…GNNTWGLRAW (68 aa)) folds into the HTH HARE-type domain. Disordered regions lie at residues 89 to 122 (EEVQTQTTPKKKRKSDDDDDEDEEILDDDVDYDD) and 141 to 178 (LDEDEDDDDHLPDGIEGDLATVEDDYTDGDYTEDPEDK). 3 stretches are compositionally biased toward acidic residues: residues 105–122 (DDDDEDEEILDDDVDYDD), 141–150 (LDEDEDDDDH), and 161–178 (TVEDDYTDGDYTEDPEDK).

It belongs to the RpoE family. RNAP is composed of a core of 2 alpha, a beta and a beta' subunits. The core is associated with a delta subunit and one of several sigma factors.

Its function is as follows. Participates in both the initiation and recycling phases of transcription. In the presence of the delta subunit, RNAP displays an increased specificity of transcription, a decreased affinity for nucleic acids, and an increased efficiency of RNA synthesis because of enhanced recycling. This is Probable DNA-directed RNA polymerase subunit delta from Listeria innocua serovar 6a (strain ATCC BAA-680 / CLIP 11262).